The primary structure comprises 392 residues: Outer membrane protein assembly factor BamB (392 aa).

Residues 1-19 form the signal peptide; the sequence is MQLRKLLLPGLLSVTLLSG. Cys20 carries N-palmitoyl cysteine lipidation. Cys20 carries the S-diacylglycerol cysteine lipid modification.

The protein belongs to the BamB family. In terms of assembly, part of the Bam complex, which is composed of the outer membrane protein BamA, and four lipoproteins BamB, BamC, BamD and BamE. Monomer. Interacts directly with BamA. The Bam complex has the shape of a hat, with the BamA beta-barrel crown in the outer membrane and the periplasmic brim formed by the BamA POTRA domains and the 4 lipoproteins.

It is found in the cell outer membrane. Functionally, part of the outer membrane protein assembly complex (Bam), which is involved in assembly and insertion of beta-barrel proteins into the outer membrane. Nonessential member of the complex, which may orient the flexible periplasmic domain of BamA for interaction with other Bam components, chaperones and nascent outer membrane proteins. Efficient substrate folding and insertion into the outer membrane requires all 5 subunits. A lateral gate may open between the first and last strands of the BamA beta-barrel that allows substrate to insert into the outer membrane; comparison of the structures of complete and nearly complete Bam complexes show there is considerable movement of all 5 proteins. The chain is Outer membrane protein assembly factor BamB from Escherichia coli (strain K12).